Consider the following 244-residue polypeptide: Venom nerve growth factor 2 (244 aa).

Positions 1-18 (MSMLCYTLIIAFLIGIWA) are cleaved as a signal peptide. Positions 19–125 (APKSEDNVPL…TLNRNIRAKR (107 aa)) are excised as a propeptide. The segment covering 47-66 (GLKTSRNTDQRHPAPKKAED) has biased composition (basic and acidic residues). Residues 47–69 (GLKTSRNTDQRHPAPKKAEDQEL) are disordered. Disulfide bonds link C139/C205 and C181/C233.

Belongs to the NGF-beta family. As to quaternary structure, homodimer; non-covalently linked. Expressed by the venom gland.

Its subcellular location is the secreted. Nerve growth factor is important for the development and maintenance of the sympathetic and sensory nervous systems. It stimulates division and differentiation of sympathetic and embryonic sensory neurons as well as basal forebrain cholinergic neurons in the brain. Its relevance in the snake venom is not clear. However, it has been shown to inhibit metalloproteinase-dependent proteolysis of platelet glycoprotein Ib alpha, suggesting a metalloproteinase inhibition to prevent metalloprotease autodigestion and/or protection against prey proteases. Binds a lipid between the two protein chains in the homodimer. The lipid-bound form promotes histamine relase from mouse mast cells, contrary to the lipid-free form. This is Venom nerve growth factor 2 from Notechis scutatus scutatus (Mainland tiger snake).